The sequence spans 2856 residues: Lipopolysaccharide-responsive and beige-like anchor protein (2856 aa).

Disordered regions lie at residues 1–35 and 939–1107; these read MASE…ALSL and EQRK…DDDY. A2 is modified (N-acetylalanine). 3 positions are modified to phosphoserine: S10, S979, and S1003. Positions 991 to 1009 are enriched in polar residues; it reads ENSSIGRASSIDSASNTEL. Residues 1010–1026 are compositionally biased toward basic and acidic residues; sequence QTHDMSSDEKKVERENQ. Over residues 1073–1082 the composition is skewed to low complexity; that stretch reads SEVSASISSP. 8 positions are modified to phosphoserine: S1097, S1132, S1136, S1219, S1221, S1228, S1244, and S1258. A disordered region spans residues 1253-1296; the sequence is FELKASTSTEAPQPQRHGLEISRQQEQTAQGTAPDAVDQQRRDS. Polar residues predominate over residues 1274-1283; it reads SRQQEQTAQG. The stretch at 1298–1340 is one WD 1 repeat; sequence STMFRIPEFKWSQMHQRLLTDLLFSIETDIQMWRSHSTKTVMD. A phosphoserine mark is found at S1487 and S1497. Residues 1529–1545 traverse the membrane as a helical segment; the sequence is AQFLALAVVYFISVLMV. Disordered regions lie at residues 1556 to 1621 and 1750 to 1778; these read DERH…LGSG and SAVS…SPKC. The segment covering 1563–1573 has biased composition (polar residues); that stretch reads LKETSSDNGNA. Residues 1586-1601 show a composition bias toward low complexity; it reads SSLTLSSVEESLEGTS. 4 positions are modified to phosphoserine: S1608, S1770, S1773, and S2057. The 109-residue stretch at 2066 to 2174 folds into the BEACH-type PH domain; the sequence is NLAGPVSLST…TVKKVVNYLP (109 aa). Residues 2193–2482 enclose the BEACH domain; that stretch reads ATPRQLFKAS…QLLIEPHPPR (290 aa). S2489 carries the post-translational modification Phosphoserine. 5 WD repeats span residues 2584–2626, 2629–2672, 2688–2728, 2770–2809, and 2812–2851; these read DQSI…LIQV, GHWD…SGIG, GHDY…RTLE, ETDD…QLFA, and GCDA…WHHE.

In terms of assembly, interacts with TOM1 and TOLLIP. In terms of tissue distribution, isoform 1 is expressed in the brain, is absent from the lung and the bone marrow and is less abundant in the spleen. Isoform 2 is expressed in the spleen, lung, brain and bone marrow. Isoform 3 is expressed in the brain, is absent from the bone marrow and is less abundant in the spleen and lung.

The protein localises to the cell membrane. It localises to the endoplasmic reticulum membrane. It is found in the golgi apparatus. The protein resides in the trans-Golgi network membrane. Its subcellular location is the lysosome membrane. Its function is as follows. Involved in coupling signal transduction and vesicle trafficking to enable polarized secretion and/or membrane deposition of immune effector molecules. Involved in phagophore growth during mitophagy by regulating ATG9A trafficking to mitochondria. The sequence is that of Lipopolysaccharide-responsive and beige-like anchor protein (Lrba) from Mus musculus (Mouse).